Reading from the N-terminus, the 334-residue chain is Holliday junction branch migration complex subunit RuvB (334 aa).

Residues 4-184 form a large ATPase domain (RuvB-L) region; it reads ADRLIQPQLQ…FGIPLRLEFY (181 aa). ATP is bound by residues Arg-24, Gly-65, Lys-68, Thr-69, Thr-70, 131–133, Arg-174, Tyr-184, and Arg-221; that span reads EDY. Residue Thr-69 participates in Mg(2+) binding. Residues 185–255 are small ATPAse domain (RuvB-S); that stretch reads NIKDLSTIVT…VADHALDLLD (71 aa). The segment at 258–334 is head domain (RuvB-H); the sequence is NEGFDYMDRK…YQHFQLIKPE (77 aa). DNA is bound by residues Arg-294, Arg-313, and Arg-318.

The protein belongs to the RuvB family. As to quaternary structure, homohexamer. Forms an RuvA(8)-RuvB(12)-Holliday junction (HJ) complex. HJ DNA is sandwiched between 2 RuvA tetramers; dsDNA enters through RuvA and exits via RuvB. An RuvB hexamer assembles on each DNA strand where it exits the tetramer. Each RuvB hexamer is contacted by two RuvA subunits (via domain III) on 2 adjacent RuvB subunits; this complex drives branch migration. In the full resolvosome a probable DNA-RuvA(4)-RuvB(12)-RuvC(2) complex forms which resolves the HJ.

The protein localises to the cytoplasm. The enzyme catalyses ATP + H2O = ADP + phosphate + H(+). Its function is as follows. The RuvA-RuvB-RuvC complex processes Holliday junction (HJ) DNA during genetic recombination and DNA repair, while the RuvA-RuvB complex plays an important role in the rescue of blocked DNA replication forks via replication fork reversal (RFR). RuvA specifically binds to HJ cruciform DNA, conferring on it an open structure. The RuvB hexamer acts as an ATP-dependent pump, pulling dsDNA into and through the RuvAB complex. RuvB forms 2 homohexamers on either side of HJ DNA bound by 1 or 2 RuvA tetramers; 4 subunits per hexamer contact DNA at a time. Coordinated motions by a converter formed by DNA-disengaged RuvB subunits stimulates ATP hydrolysis and nucleotide exchange. Immobilization of the converter enables RuvB to convert the ATP-contained energy into a lever motion, pulling 2 nucleotides of DNA out of the RuvA tetramer per ATP hydrolyzed, thus driving DNA branch migration. The RuvB motors rotate together with the DNA substrate, which together with the progressing nucleotide cycle form the mechanistic basis for DNA recombination by continuous HJ branch migration. Branch migration allows RuvC to scan DNA until it finds its consensus sequence, where it cleaves and resolves cruciform DNA. This Shewanella sp. (strain W3-18-1) protein is Holliday junction branch migration complex subunit RuvB.